A 503-amino-acid polypeptide reads, in one-letter code: Palmitoleoyl-protein carboxylesterase NOTUM (503 aa).

The signal sequence occupies residues Met1–Gly19. The disordered stretch occupies residues Arg23–Gly53. Residues Pro33 to Pro43 are compositionally biased toward pro residues. Residue Ser88 is modified to Phosphoserine. N-linked (GlcNAc...) asparagine glycosylation occurs at Asn103. Residues Ser239, Asp347, and His396 each act as charge relay system in the active site.

Belongs to the pectinacetylesterase family. Notum subfamily. As to expression, widely expressed. Expressed in lung, ovary, kidney, liver and brain. Not detected in thymus, heart, spleen, stomach, skeletal muscle and bone marrow.

It is found in the secreted. It catalyses the reaction [Wnt protein]-O-(9Z)-hexadecenoyl-L-serine + H2O = [Wnt protein]-L-serine + (9Z)-hexadecenoate + H(+). Functionally, carboxylesterase that acts as a key negative regulator of the Wnt signaling pathway by specifically mediating depalmitoleoylation of WNT proteins. Serine palmitoleoylation of WNT proteins is required for efficient binding to frizzled receptors. This is Palmitoleoyl-protein carboxylesterase NOTUM from Mus musculus (Mouse).